A 630-amino-acid chain; its full sequence is tRNA uridine 5-carboxymethylaminomethyl modification enzyme MnmG (630 aa).

FAD-binding positions include 13–18, Val-125, and Ser-180; that span reads GGGHAG. Residue 273 to 287 coordinates NAD(+); it reads GPRYCPSIEDKIHRF. FAD is bound at residue Gln-370.

This sequence belongs to the MnmG family. Homodimer. Heterotetramer of two MnmE and two MnmG subunits. The cofactor is FAD.

The protein localises to the cytoplasm. Its function is as follows. NAD-binding protein involved in the addition of a carboxymethylaminomethyl (cmnm) group at the wobble position (U34) of certain tRNAs, forming tRNA-cmnm(5)s(2)U34. The chain is tRNA uridine 5-carboxymethylaminomethyl modification enzyme MnmG from Shewanella woodyi (strain ATCC 51908 / MS32).